A 168-amino-acid chain; its full sequence is Microtubule-associated protein Jupiter (168 aa).

Over residues 1 to 14 the composition is skewed to polar residues; it reads MISNFDCTDNQASS. Residues 1 to 33 form a disordered region; sequence MISNFDCTDNQASSKVLRPPGGGSSDIFGSEMP. Phosphoserine is present on S24. T35 carries the phosphothreonine modification. Residues 76–87 are compositionally biased toward basic and acidic residues; that stretch reads RGQKTVDSHSRL. 2 disordered regions span residues 76 to 106 and 124 to 168; these read RGQKTVDSHSRLFGEPTRPITPGKNHMKSSI and NGHY…GAGK. T92 and T96 each carry phosphothreonine. 3 positions are modified to phosphoserine: S105, S133, and S144. Over residues 131–144 the composition is skewed to low complexity; sequence SGSVSSASSSVSSS. Positions 145-155 are enriched in polar residues; sequence TENLKMNSGSR.

Belongs to the MAP Jupiter family.

It is found in the nucleus. The protein localises to the cytoplasm. It localises to the cytoskeleton. Its subcellular location is the spindle. Its function is as follows. Binds to all microtubule populations. The polypeptide is Microtubule-associated protein Jupiter (Drosophila simulans (Fruit fly)).